Consider the following 313-residue polypeptide: Postacrosomal sheath WW domain-binding protein (313 aa).

Residues 8 to 87 (TESRRGALIP…GLMSDCTIEQ (80 aa)) form the GRAM domain. 12 consecutive repeat copies span residues 179 to 185 (YGPPPPG), 193 to 199 (YGTPPEG), 207 to 213 (YGAPPMG), 214 to 220 (YGAPPVG), 221 to 227 (YGVPPGG), 228 to 234 (YGVPPGG), 235 to 241 (YGVPPGG), 242 to 248 (YGAPPGG), 249 to 255 (YGVPPGG), 256 to 262 (YGAPPGG), 263 to 269 (YGAPPAG), and 270 to 276 (YGAPPAG). Residues 179–276 (YGPPPPGYTV…PAGYGAPPAG (98 aa)) form a 12 X 7 AA tandem repeat of Y-G-X-P-P-X-G region. The PPxY motif 1 motif lies at 183–186 (PPGY). The segment covering 254–264 (GGYGAPPGGYG) has biased composition (gly residues). The disordered stretch occupies residues 254–313 (GGYGAPPGGYGAPPAGYGAPPAGNEALPPAYEAPSAGNTAASHRSMTAQQETSLPTTSSS). The segment covering 265 to 276 (APPAGYGAPPAG) has biased composition (low complexity). Positions 281-284 (PPAY) match the PPxY motif 2 motif. Over residues 289–313 (AGNTAASHRSMTAQQETSLPTTSSS) the composition is skewed to polar residues.

Expressed in testis.

In terms of biological role, may play a role in meiotic resumption and pronuclear formation, mediated by a WW domain-signaling pathway during fertilization. The polypeptide is Postacrosomal sheath WW domain-binding protein (WBP2NL) (Bos taurus (Bovine)).